The sequence spans 435 residues: Succinate--CoA ligase [ADP-forming] subunit beta, mitochondrial (435 aa).

Residues 1–20 (MIGRISQPLLNTSQKFMAPA) constitute a mitochondrion transit peptide. The ATP-grasp domain maps to 32-259 (MKILQNYEIK…SNAEFRQAKL (228 aa)). ATP-binding positions include lysine 69 and 76–78 (GRG). 2 residues coordinate Mg(2+): asparagine 229 and aspartate 243. Substrate-binding positions include asparagine 294 and 352–354 (GIM).

The protein belongs to the succinate/malate CoA ligase beta subunit family. ATP-specific subunit beta subfamily. Heterodimer of an alpha and a beta subunit. The beta subunit determines specificity for ATP. The cofactor is Mg(2+).

It localises to the mitochondrion. It carries out the reaction succinate + ATP + CoA = succinyl-CoA + ADP + phosphate. It participates in carbohydrate metabolism; tricarboxylic acid cycle; succinate from succinyl-CoA (ligase route): step 1/1. ATP-specific succinyl-CoA synthetase functions in the citric acid cycle (TCA), coupling the hydrolysis of succinyl-CoA to the synthesis of ATP and thus represents the only step of substrate-level phosphorylation in the TCA. The beta subunit provides nucleotide specificity of the enzyme and binds the substrate succinate, while the binding sites for coenzyme A and phosphate are found in the alpha subunit. In Caenorhabditis elegans, this protein is Succinate--CoA ligase [ADP-forming] subunit beta, mitochondrial.